We begin with the raw amino-acid sequence, 438 residues long: Methylenetetrahydrofolate--tRNA-(uracil-5-)-methyltransferase TrmFO (438 aa).

9-14 lines the FAD pocket; that stretch reads GGGLAG.

This sequence belongs to the MnmG family. TrmFO subfamily. FAD is required as a cofactor.

The protein resides in the cytoplasm. It carries out the reaction uridine(54) in tRNA + (6R)-5,10-methylene-5,6,7,8-tetrahydrofolate + NADH + H(+) = 5-methyluridine(54) in tRNA + (6S)-5,6,7,8-tetrahydrofolate + NAD(+). The enzyme catalyses uridine(54) in tRNA + (6R)-5,10-methylene-5,6,7,8-tetrahydrofolate + NADPH + H(+) = 5-methyluridine(54) in tRNA + (6S)-5,6,7,8-tetrahydrofolate + NADP(+). In terms of biological role, catalyzes the folate-dependent formation of 5-methyl-uridine at position 54 (M-5-U54) in all tRNAs. This is Methylenetetrahydrofolate--tRNA-(uracil-5-)-methyltransferase TrmFO from Lactobacillus johnsonii (strain CNCM I-12250 / La1 / NCC 533).